We begin with the raw amino-acid sequence, 642 residues long: Arginine--tRNA ligase, chloroplastic/mitochondrial (642 aa).

Residues methionine 1–methionine 53 constitute a chloroplast and mitochondrion transit peptide. At alanine 54 the chain carries N-acetylalanine. The 'HIGH' region motif lies at proline 190 to leucine 201.

It belongs to the class-I aminoacyl-tRNA synthetase family.

The protein resides in the plastid. It localises to the chloroplast. The protein localises to the mitochondrion. The enzyme catalyses tRNA(Arg) + L-arginine + ATP = L-arginyl-tRNA(Arg) + AMP + diphosphate. Forms part of a macromolecular complex that catalyzes the attachment of specific amino acids to cognate tRNAs during protein synthesis. This is Arginine--tRNA ligase, chloroplastic/mitochondrial from Arabidopsis thaliana (Mouse-ear cress).